The sequence spans 557 residues: DNA ligase (557 aa).

Glutamate 249 is a binding site for ATP. Catalysis depends on lysine 251, which acts as the N6-AMP-lysine intermediate. ATP is bound by residues arginine 256, arginine 271, glutamate 301, phenylalanine 340, arginine 417, and lysine 423.

This sequence belongs to the ATP-dependent DNA ligase family. Mg(2+) is required as a cofactor.

The enzyme catalyses ATP + (deoxyribonucleotide)n-3'-hydroxyl + 5'-phospho-(deoxyribonucleotide)m = (deoxyribonucleotide)n+m + AMP + diphosphate.. DNA ligase that seals nicks in double-stranded DNA during DNA replication, DNA recombination and DNA repair. The sequence is that of DNA ligase from Methanothermobacter thermautotrophicus (Methanobacterium thermoformicicum).